The chain runs to 206 residues: Macrophage immunometabolism regulator (206 aa).

Belongs to the UNC119-binding protein family. Interacts with unc119 family proteins; interaction preferentially takes place when unc119 proteins are unliganded with myristoylated proteins.

The protein localises to the cytoplasm. It localises to the cell projection. It is found in the cilium. May play a role in immune regulation through regulation of the macrophage function. Involved in the recruitment of macrophages in response to injury. May also play a role in trafficking of proteins via its interaction with unc119 family cargo adapters. May play a role in ciliary membrane localization. Its function is as follows. Regulates the macrophage function, by enhancing the resolution of inflammation and wound repair functions mediated by M2 macrophages. The regulation of macrophage function is, due at least in part, to the role of C5orf30 in regulating ability to inhibit glycolysis. Probably plays alaso a role in trafficking of proteins via its interaction with UNC119 and UNC119B cargo adapters: may help the release of UNC119 and UNC119B cargo or the recycling of UNC119 and UNC119B. May play a role in ciliary membrane localization via its interaction with UNC119B and protein transport into photoreceptor cells. The protein is Macrophage immunometabolism regulator (macir) of Danio rerio (Zebrafish).